The sequence spans 284 residues: D-tagatose-1,6-bisphosphate aldolase subunit GatY (284 aa).

Asp-82 functions as the Proton donor in the catalytic mechanism. The Zn(2+) site is built by His-83 and His-180. Gly-181 contributes to the dihydroxyacetone phosphate binding site. Residue His-208 participates in Zn(2+) binding. Dihydroxyacetone phosphate contacts are provided by residues 209–211 (GAS) and 230–233 (NVAT).

It belongs to the class II fructose-bisphosphate aldolase family. TagBP aldolase GatY subfamily. Forms a complex with GatZ. The cofactor is Zn(2+).

The catalysed reaction is D-tagatofuranose 1,6-bisphosphate = D-glyceraldehyde 3-phosphate + dihydroxyacetone phosphate. It participates in carbohydrate metabolism; D-tagatose 6-phosphate degradation; D-glyceraldehyde 3-phosphate and glycerone phosphate from D-tagatose 6-phosphate: step 2/2. Functionally, catalytic subunit of the tagatose-1,6-bisphosphate aldolase GatYZ, which catalyzes the reversible aldol condensation of dihydroxyacetone phosphate (DHAP or glycerone-phosphate) with glyceraldehyde 3-phosphate (G3P) to produce tagatose 1,6-bisphosphate (TBP). Requires GatZ subunit for full activity and stability. Is involved in the catabolism of galactitol. The sequence is that of D-tagatose-1,6-bisphosphate aldolase subunit GatY from Salmonella enteritidis PT4 (strain P125109).